Consider the following 329-residue polypeptide: 4-hydroxythreonine-4-phosphate dehydrogenase (329 aa).

Positions 136 and 137 each coordinate substrate. A divalent metal cation-binding residues include His166, His211, and His266. Substrate is bound by residues Lys274, Asn283, and Arg292.

The protein belongs to the PdxA family. Homodimer. The cofactor is Zn(2+). It depends on Mg(2+) as a cofactor. Requires Co(2+) as cofactor.

It localises to the cytoplasm. It catalyses the reaction 4-(phosphooxy)-L-threonine + NAD(+) = 3-amino-2-oxopropyl phosphate + CO2 + NADH. It functions in the pathway cofactor biosynthesis; pyridoxine 5'-phosphate biosynthesis; pyridoxine 5'-phosphate from D-erythrose 4-phosphate: step 4/5. Functionally, catalyzes the NAD(P)-dependent oxidation of 4-(phosphooxy)-L-threonine (HTP) into 2-amino-3-oxo-4-(phosphooxy)butyric acid which spontaneously decarboxylates to form 3-amino-2-oxopropyl phosphate (AHAP). The protein is 4-hydroxythreonine-4-phosphate dehydrogenase of Escherichia coli O6:H1 (strain CFT073 / ATCC 700928 / UPEC).